Reading from the N-terminus, the 423-residue chain is Serine hydroxymethyltransferase (423 aa).

Residues Leu-126 and 130–132 (GHL) contribute to the (6S)-5,6,7,8-tetrahydrofolate site. N6-(pyridoxal phosphate)lysine is present on Lys-235.

The protein belongs to the SHMT family. Homodimer. Pyridoxal 5'-phosphate serves as cofactor.

It is found in the cytoplasm. The enzyme catalyses (6R)-5,10-methylene-5,6,7,8-tetrahydrofolate + glycine + H2O = (6S)-5,6,7,8-tetrahydrofolate + L-serine. It functions in the pathway one-carbon metabolism; tetrahydrofolate interconversion. The protein operates within amino-acid biosynthesis; glycine biosynthesis; glycine from L-serine: step 1/1. Catalyzes the reversible interconversion of serine and glycine with tetrahydrofolate (THF) serving as the one-carbon carrier. This reaction serves as the major source of one-carbon groups required for the biosynthesis of purines, thymidylate, methionine, and other important biomolecules. Also exhibits THF-independent aldolase activity toward beta-hydroxyamino acids, producing glycine and aldehydes, via a retro-aldol mechanism. This Sorangium cellulosum (strain So ce56) (Polyangium cellulosum (strain So ce56)) protein is Serine hydroxymethyltransferase.